The sequence spans 437 residues: UDP-N-acetylmuramate--L-alanine ligase (437 aa).

Residue 108 to 114 (GAHGKTS) participates in ATP binding.

Belongs to the MurCDEF family.

Its subcellular location is the cytoplasm. It catalyses the reaction UDP-N-acetyl-alpha-D-muramate + L-alanine + ATP = UDP-N-acetyl-alpha-D-muramoyl-L-alanine + ADP + phosphate + H(+). It participates in cell wall biogenesis; peptidoglycan biosynthesis. Functionally, cell wall formation. In Staphylococcus epidermidis (strain ATCC 12228 / FDA PCI 1200), this protein is UDP-N-acetylmuramate--L-alanine ligase.